The chain runs to 212 residues: External core antigen (212 aa).

A signal peptide spans 1 to 19 (MQLFHLCLIISCSCPTVQA). Residues 25-27 (GWL) form an HBEAG region. The segment at 165–212 (NAPILSTLPETTVVRRRGRSPRRRTPSPRRRRSQSPRRRRSQSRESQC) is disordered. Residues 178 to 205 (VRRRGRSPRRRTPSPRRRRSQSPRRRRS) show a composition bias toward basic residues. One copy of the 1; half-length repeat lies at 184 to 190 (SPRRRTP). The tract at residues 184-206 (SPRRRTPSPRRRRSQSPRRRRSQ) is 3 X 8 AA repeats of S-P-R-R-R-R-S-Q. A propeptide spanning residues 184-212 (SPRRRTPSPRRRRSQSPRRRRSQSRESQC) is cleaved from the precursor. Repeat copies occupy residues 191-198 (SPRRRRSQ) and 199-206 (SPRRRRSQ).

The protein belongs to the orthohepadnavirus precore antigen family. In terms of assembly, homodimerizes. Post-translationally, phosphorylated. In terms of processing, cleaved by host furin.

The protein localises to the secreted. It is found in the host nucleus. May regulate immune response to the intracellular capsid in acting as a T-cell tolerogen, by having an immunoregulatory effect which prevents destruction of infected cells by cytotoxic T-cells. This immune regulation may predispose to chronicity during perinatal infections and prevent severe liver injury during adult infections. The chain is External core antigen from Homo sapiens (Human).